The following is a 137-amino-acid chain: NADPH-dependent 7-cyano-7-deazaguanine reductase (137 aa).

C51 functions as the Thioimide intermediate in the catalytic mechanism. The Proton donor role is filled by D58. Substrate contacts are provided by residues V73 to L75 and H92 to E93.

The protein belongs to the GTP cyclohydrolase I family. QueF type 1 subfamily.

It localises to the cytoplasm. The catalysed reaction is 7-aminomethyl-7-carbaguanine + 2 NADP(+) = 7-cyano-7-deazaguanine + 2 NADPH + 3 H(+). It functions in the pathway tRNA modification; tRNA-queuosine biosynthesis. Catalyzes the NADPH-dependent reduction of 7-cyano-7-deazaguanine (preQ0) to 7-aminomethyl-7-deazaguanine (preQ1). In Gloeobacter violaceus (strain ATCC 29082 / PCC 7421), this protein is NADPH-dependent 7-cyano-7-deazaguanine reductase.